A 413-amino-acid polypeptide reads, in one-letter code: Putative competence-damage inducible protein (413 aa).

The protein belongs to the CinA family.

The polypeptide is Putative competence-damage inducible protein (Lacticaseibacillus paracasei (strain ATCC 334 / BCRC 17002 / CCUG 31169 / CIP 107868 / KCTC 3260 / NRRL B-441) (Lactobacillus paracasei)).